Consider the following 268-residue polypeptide: 5'-nucleotidase SurE (268 aa).

A divalent metal cation is bound by residues Asp-8, Asp-9, Ser-40, and Asn-98.

The protein belongs to the SurE nucleotidase family. A divalent metal cation serves as cofactor.

It localises to the cytoplasm. It catalyses the reaction a ribonucleoside 5'-phosphate + H2O = a ribonucleoside + phosphate. Functionally, nucleotidase that shows phosphatase activity on nucleoside 5'-monophosphates. The protein is 5'-nucleotidase SurE of Trichodesmium erythraeum (strain IMS101).